Consider the following 396-residue polypeptide: MAETQVRNFNINFGPQHPAAHGVLRLVLELDGEVVERVDPHIGLLHRGTEKLMEAKTYLQAVPYLDRLDYVAPMNQEHAYALAVERLLDIEVPKRGQLIRVLYSEIGRILNHLLNVTTQAMDVGALTPPLWGFEEREKLMVFYERACGARMHAAYFRPGGVHQDLPDQLIEDIGKWIDPFFTTLKNLDDLITPNRIFKQRNVDIGVVKLEDAWAWGFSGVMVRGSGAAWDLRKSQPYECYSEMEFDIPVGKNGDCYDRYLIRMEEMRQSARIMRQCVDLLLGKERVGPVSNTDHKIVPPKRGEMKRSMEALIHHFKLYTEGYHVPAGEVYAAVEAPKGEFGVYLVSDGSNKPYRFKLRAPGFAHLQAMDFLCRGHMLADVSAILGSLDIVFGEVDR.

The protein belongs to the complex I 49 kDa subunit family. In terms of assembly, NDH-1 is composed of 14 different subunits. Subunits NuoB, C, D, E, F, and G constitute the peripheral sector of the complex.

Its subcellular location is the cell inner membrane. It carries out the reaction a quinone + NADH + 5 H(+)(in) = a quinol + NAD(+) + 4 H(+)(out). NDH-1 shuttles electrons from NADH, via FMN and iron-sulfur (Fe-S) centers, to quinones in the respiratory chain. The immediate electron acceptor for the enzyme in this species is believed to be ubiquinone. Couples the redox reaction to proton translocation (for every two electrons transferred, four hydrogen ions are translocated across the cytoplasmic membrane), and thus conserves the redox energy in a proton gradient. The sequence is that of NADH-quinone oxidoreductase subunit D from Brucella abortus (strain S19).